Here is a 136-residue protein sequence, read N- to C-terminus: Peptide methionine sulfoxide reductase MsrB (136 aa).

The MsrB domain occupies 9 to 136 (DAEWKALLAE…NSASLDFKPK (128 aa)). Residues Cys-53, Cys-56, Cys-102, and Cys-105 each coordinate Zn(2+). The Nucleophile role is filled by Cys-125.

The protein belongs to the MsrB Met sulfoxide reductase family. The cofactor is Zn(2+).

It carries out the reaction L-methionyl-[protein] + [thioredoxin]-disulfide + H2O = L-methionyl-(R)-S-oxide-[protein] + [thioredoxin]-dithiol. The sequence is that of Peptide methionine sulfoxide reductase MsrB from Polaromonas sp. (strain JS666 / ATCC BAA-500).